Here is a 177-residue protein sequence, read N- to C-terminus: Large ribosomal subunit protein uL6 (177 aa).

Belongs to the universal ribosomal protein uL6 family. Part of the 50S ribosomal subunit.

In terms of biological role, this protein binds to the 23S rRNA, and is important in its secondary structure. It is located near the subunit interface in the base of the L7/L12 stalk, and near the tRNA binding site of the peptidyltransferase center. This chain is Large ribosomal subunit protein uL6, found in Cellvibrio japonicus (strain Ueda107) (Pseudomonas fluorescens subsp. cellulosa).